A 167-amino-acid polypeptide reads, in one-letter code: uncharacterized protein (167 aa).

It localises to the mitochondrion. This is an uncharacterized protein from Marchantia polymorpha (Common liverwort).